The following is a 113-amino-acid chain: Nitrogenase-stabilizing/protective protein NifW (113 aa).

It belongs to the NifW family. In terms of assembly, homotrimer; associates with NifD.

May protect the nitrogenase Fe-Mo protein from oxidative damage. The sequence is that of Nitrogenase-stabilizing/protective protein NifW from Dechloromonas aromatica (strain RCB).